Here is a 103-residue protein sequence, read N- to C-terminus: Pyrimidine/purine nucleoside phosphorylase (103 aa).

The protein belongs to the nucleoside phosphorylase PpnP family.

The enzyme catalyses a purine D-ribonucleoside + phosphate = a purine nucleobase + alpha-D-ribose 1-phosphate. It carries out the reaction adenosine + phosphate = alpha-D-ribose 1-phosphate + adenine. The catalysed reaction is cytidine + phosphate = cytosine + alpha-D-ribose 1-phosphate. It catalyses the reaction guanosine + phosphate = alpha-D-ribose 1-phosphate + guanine. The enzyme catalyses inosine + phosphate = alpha-D-ribose 1-phosphate + hypoxanthine. It carries out the reaction thymidine + phosphate = 2-deoxy-alpha-D-ribose 1-phosphate + thymine. The catalysed reaction is uridine + phosphate = alpha-D-ribose 1-phosphate + uracil. It catalyses the reaction xanthosine + phosphate = alpha-D-ribose 1-phosphate + xanthine. Catalyzes the phosphorolysis of diverse nucleosides, yielding D-ribose 1-phosphate and the respective free bases. Can use uridine, adenosine, guanosine, cytidine, thymidine, inosine and xanthosine as substrates. Also catalyzes the reverse reactions. The protein is Pyrimidine/purine nucleoside phosphorylase of Methylococcus capsulatus (strain ATCC 33009 / NCIMB 11132 / Bath).